The chain runs to 681 residues: Propionyl-CoA carboxylase alpha chain (681 aa).

The Biotin carboxylation domain maps to 1 to 466 (MFNKILIANR…TTAFIAEEYP (466 aa)). Residues lysine 116, 148 to 209 (SNQI…PRHI), glutamate 200, and asparagine 235 contribute to the ATP site. The 198-residue stretch at 120-317 (KKIAQEANVS…LVEQMIRVAA (198 aa)) folds into the ATP-grasp domain. Mg(2+)-binding residues include glutamate 275, glutamate 288, and asparagine 290. Mn(2+) is bound by residues glutamate 275, glutamate 288, and asparagine 290. Glutamate 288 is a catalytic residue. Position 348 (phenylalanine 348) interacts with biotin. The 80-residue stretch at 602 to 681 (LMPEKLPPDT…AVDDVIMEFE (80 aa)) folds into the Biotinyl-binding domain. An N6-biotinyllysine modification is found at lysine 647.

In terms of assembly, the holoenzyme is a dodecamer composed of 6 PccA/alpha subunits and 6 PccB/beta subunits. It depends on Mg(2+) as a cofactor. The cofactor is Mn(2+). Biotin is required as a cofactor. In terms of processing, the biotin cofactor is covalently attached to the C-terminal biotinyl-binding domain and is required for the catalytic activity.

It catalyses the reaction propanoyl-CoA + hydrogencarbonate + ATP = (S)-methylmalonyl-CoA + ADP + phosphate + H(+). Its pathway is metabolic intermediate metabolism; propanoyl-CoA degradation; succinyl-CoA from propanoyl-CoA: step 1/3. Its function is as follows. This is one of the 2 subunits of the biotin-dependent propionyl-CoA carboxylase (PCC), the enzyme catalyzing the carboxylation of propionyl-CoA/propanoyl-CoA to D-methylmalonyl-CoA/(S)-methylmalonyl-CoA. Within the holoenzyme, the alpha subunit catalyzes the ATP-dependent carboxylation of the biotin carried by the biotin carboxyl carrier (BCC) domain, while the beta subunit then tranfers the carboxyl group from carboxylated biotin to propionyl-CoA. This is Propionyl-CoA carboxylase alpha chain from Ruegeria pomeroyi (strain ATCC 700808 / DSM 15171 / DSS-3) (Silicibacter pomeroyi).